A 936-amino-acid polypeptide reads, in one-letter code: Isoleucine--tRNA ligase (936 aa).

The 'HIGH' region motif lies at Pro-58–Thr-68. An L-isoleucyl-5'-AMP-binding site is contributed by Glu-561. Residues Lys-602–Ser-606 carry the 'KMSKS' region motif. Lys-605 is an ATP binding site. 4 residues coordinate Zn(2+): Cys-899, Cys-902, Cys-919, and Cys-922.

This sequence belongs to the class-I aminoacyl-tRNA synthetase family. IleS type 1 subfamily. As to quaternary structure, monomer. It depends on Zn(2+) as a cofactor.

It is found in the cytoplasm. It carries out the reaction tRNA(Ile) + L-isoleucine + ATP = L-isoleucyl-tRNA(Ile) + AMP + diphosphate. Functionally, catalyzes the attachment of isoleucine to tRNA(Ile). As IleRS can inadvertently accommodate and process structurally similar amino acids such as valine, to avoid such errors it has two additional distinct tRNA(Ile)-dependent editing activities. One activity is designated as 'pretransfer' editing and involves the hydrolysis of activated Val-AMP. The other activity is designated 'posttransfer' editing and involves deacylation of mischarged Val-tRNA(Ile). The polypeptide is Isoleucine--tRNA ligase (Coxiella burnetii (strain RSA 331 / Henzerling II)).